The sequence spans 705 residues: 3-hydroxypropionate--CoA ligase [ADP-forming] (705 aa).

The ATP-grasp domain maps to K25–K61. Position 51–61 (A51–K61) interacts with ATP.

This sequence in the N-terminal section; belongs to the acetate CoA ligase beta subunit family. It in the C-terminal section; belongs to the acetate CoA ligase alpha subunit family. It depends on Mg(2+) as a cofactor. Mn(2+) serves as cofactor.

The catalysed reaction is 3-hydroxypropanoate + ATP + CoA = 3-hydroxypropanoyl-CoA + ADP + phosphate. Involved in thaumarchaeal hydroxypropionate/hydroxybutyrate (HP/HB) cycle, a modified version of the autotrophic HP/HB cycle of Crenarchaeota. Catalyzes the formation of 3-hydroxypropionyl-CoA, ADP and phosphate from 3-hydroxypropionate, coenzyme A (CoA) and ATP. Can also use 4-hydroxybutyrate, propionate and butyrate, with poor catalytic efficiency. This Nitrosopumilus maritimus (strain SCM1) protein is 3-hydroxypropionate--CoA ligase [ADP-forming].